The following is a 576-amino-acid chain: F-actin capping regulator BSP1 (576 aa).

A disordered region spans residues 24 to 50; the sequence is RYSNIPSSKPAGEALSPVRSHNSGEYR. Residues Ser-46, Ser-79, and Ser-88 each carry the phosphoserine modification. 2 disordered regions span residues 132 to 160 and 173 to 316; these read NDSN…PREK and GRAD…KRIP. A Phosphoserine modification is found at Ser-185. Over residues 191–206 the composition is skewed to basic and acidic residues; the sequence is TRRDHIKITDGNEEKP. Ser-220 bears the Phosphoserine mark. 2 stretches are compositionally biased toward polar residues: residues 243–255 and 264–279; these read SRST…LSSL and KSYN…TVKS. Residues 304–313 show a composition bias toward pro residues; the sequence is KPTPPSPPAK. Phosphoserine occurs at positions 309 and 320. The tract at residues 408–470 is interaction with F-actin; it reads SIPEAIKGIQ…LSLRNNLKKR (63 aa). The interval 541–576 is disordered; the sequence is DKYTTSRDETVKETKPLVHPNKNRTRGPRRKLPTRV. The segment covering 544–556 has biased composition (basic and acidic residues); that stretch reads TTSRDETVKETKP. The interval 547-576 is interaction with the F-actin capping complex; it reads RDETVKETKPLVHPNKNRTRGPRRKLPTRV. The span at 561–576 shows a compositional bias: basic residues; the sequence is NKNRTRGPRRKLPTRV.

Interacts (via C-terminus) with the CAP1-CAP2 F-actin capping protein complex. Interacts with INP52 (via SAC domain); the interaction is direct. Interacts with INP53 (via SAC domain); the interaction is direct. Interacts with RVS167. Interacts with SLA1. Phosphorylated by CDC28.

It localises to the cytoplasm. Its subcellular location is the cytoskeleton. The protein localises to the actin patch. The protein resides in the cell membrane. In terms of biological role, recruits the capping protein complex to actin patches and the actomyosin contractile ring, and/or stabilizes their interaction. May serve as an adapter to link INP52 and INP53 to the cortical actin cytoskeleton. Binds F-actin. This is F-actin capping regulator BSP1 (BSP1) from Saccharomyces cerevisiae (strain ATCC 204508 / S288c) (Baker's yeast).